A 335-amino-acid chain; its full sequence is Glycerol-3-phosphate dehydrogenase [NAD(P)+] (335 aa).

NADPH is bound by residues Ser-12, Trp-13, and Lys-107. The sn-glycerol 3-phosphate site is built by Lys-107, Gly-138, and Ser-140. Ala-142 contributes to the NADPH binding site. Residues Lys-193, Asp-246, Ser-256, Arg-257, and Asn-258 each contribute to the sn-glycerol 3-phosphate site. Residue Lys-193 is the Proton acceptor of the active site. Position 257 (Arg-257) interacts with NADPH. NADPH-binding residues include Val-281 and Glu-283.

Belongs to the NAD-dependent glycerol-3-phosphate dehydrogenase family.

It is found in the cytoplasm. It carries out the reaction sn-glycerol 3-phosphate + NAD(+) = dihydroxyacetone phosphate + NADH + H(+). The catalysed reaction is sn-glycerol 3-phosphate + NADP(+) = dihydroxyacetone phosphate + NADPH + H(+). It functions in the pathway membrane lipid metabolism; glycerophospholipid metabolism. In terms of biological role, catalyzes the reduction of the glycolytic intermediate dihydroxyacetone phosphate (DHAP) to sn-glycerol 3-phosphate (G3P), the key precursor for phospholipid synthesis. The polypeptide is Glycerol-3-phosphate dehydrogenase [NAD(P)+] (Citrifermentans bemidjiense (strain ATCC BAA-1014 / DSM 16622 / JCM 12645 / Bem) (Geobacter bemidjiensis)).